Consider the following 839-residue polypeptide: Taste receptor type 1 member 2 (839 aa).

Residues Met1–Ala19 form the signal peptide. At Glu20–Thr566 the chain is on the extracellular side. N-linked (GlcNAc...) asparagine glycosylation is found at Asn84, Asn127, Asn248, Asn292, Asn312, Asn368, Asn428, Asn487, and Asn527. The helical transmembrane segment at Ile567–Phe587 threads the bilayer. Residues Trp588–Pro602 lie on the Cytoplasmic side of the membrane. Residues Met603 to Gly623 form a helical membrane-spanning segment. Topologically, residues Pro624–Ala635 are extracellular. Residues Leu636 to Val656 form a helical membrane-spanning segment. The Cytoplasmic portion of the chain corresponds to Cys657–Ser681. The chain crosses the membrane as a helical span at residues Met682 to Leu702. At Asn703–Ser727 the chain is on the extracellular side. A helical membrane pass occupies residues Leu728–Met748. Residues Gly749–Lys760 are Cytoplasmic-facing. Residues Phe761 to Ser781 form a helical membrane-spanning segment. Residues Ala782–Asn784 lie on the Extracellular side of the membrane. Residues Gly785–Leu805 traverse the membrane as a helical segment. Residues Gly806 to Asp839 lie on the Cytoplasmic side of the membrane.

Belongs to the G-protein coupled receptor 3 family. TAS1R subfamily. As to quaternary structure, forms heterodimers with TAS1R3.

Its subcellular location is the cell membrane. In terms of biological role, putative taste receptor. TAS1R2/TAS1R3 recognizes diverse natural and synthetic sweeteners. The sequence is that of Taste receptor type 1 member 2 (TAS1R2) from Papio hamadryas (Hamadryas baboon).